The sequence spans 83 residues: Defensin-1 (83 aa).

A signal peptide spans Met1–Gly33. Disulfide bonds link Cys36–Cys82, Cys47–Cys67, Cys53–Cys76, and Cys57–Cys78.

This sequence belongs to the DEFL family.

It is found in the secreted. In terms of biological role, plant defense peptide. Has antifungal activity against B.cinera, F.oxysporum, F.solani and H.annosum with IC(50) values of 0.4 ug/ml, 2.9 ug/ml, 0.9 ug/ml and 1.4 ug/ml, respectively. Has modest antifungal activity against C.albicans and T.reesei. Causes thickening of F.oxysporum hyphae and an increase in their branching. Lacks antibacterial activity against the Gram-negative bacteria E.coli and E.carotovora. The chain is Defensin-1 from Pinus sylvestris (Scotch pine).